We begin with the raw amino-acid sequence, 100 residues long: Signal recognition particle 19 kDa protein (100 aa).

This sequence belongs to the SRP19 family. Part of the signal recognition particle protein translocation system, which is composed of SRP and FtsY. Archaeal SRP consists of a 7S RNA molecule of 300 nucleotides and two protein subunits: SRP54 and SRP19.

Its subcellular location is the cytoplasm. Involved in targeting and insertion of nascent membrane proteins into the cytoplasmic membrane. Binds directly to 7S RNA and mediates binding of the 54 kDa subunit of the SRP. This chain is Signal recognition particle 19 kDa protein, found in Caldivirga maquilingensis (strain ATCC 700844 / DSM 13496 / JCM 10307 / IC-167).